The primary structure comprises 249 residues: Hydroxyacylglutathione hydrolase (249 aa).

The Zn(2+) site is built by H53, H55, D57, H58, H110, D127, and H165.

It belongs to the metallo-beta-lactamase superfamily. Glyoxalase II family. Monomer. Requires Zn(2+) as cofactor.

It catalyses the reaction an S-(2-hydroxyacyl)glutathione + H2O = a 2-hydroxy carboxylate + glutathione + H(+). Its pathway is secondary metabolite metabolism; methylglyoxal degradation; (R)-lactate from methylglyoxal: step 2/2. Thiolesterase that catalyzes the hydrolysis of S-D-lactoyl-glutathione to form glutathione and D-lactic acid. In Buchnera aphidicola subsp. Baizongia pistaciae (strain Bp), this protein is Hydroxyacylglutathione hydrolase.